A 76-amino-acid chain; its full sequence is ADVPGNYPLDTRGYSYYCTKLGENEFCKKICKIHGVSYGYCYNSYCWCEYLEGKDINIWDAVKNHCTNTNLYPNGK.

An LCN-type CS-alpha/beta domain is found at 4–67; it reads PGNYPLDTRG…IWDAVKNHCT (64 aa). Cystine bridges form between cysteine 18/cysteine 41, cysteine 27/cysteine 46, and cysteine 31/cysteine 48.

It belongs to the long (3 C-C) scorpion toxin superfamily. Sodium channel inhibitor family. Beta subfamily. Expressed by the venom gland.

It localises to the secreted. In terms of biological role, binds to sodium channels (Nav) and affects the channel activation process. The sequence is that of Toxin Acra III-1 from Androctonus crassicauda (Arabian fat-tailed scorpion).